Here is a 481-residue protein sequence, read N- to C-terminus: Endoplasmic reticulum lectin 1 (481 aa).

The first 27 residues, 1-27 (MRRSDRLRCAGASLLVVLCGVFRSSFG), serve as a signal peptide directing secretion. MRH domains are found at residues 108–245 (SSCS…LCNH) and 340–467 (SYCF…ICKI). 6 cysteine pairs are disulfide-bonded: cysteine 110–cysteine 123, cysteine 198–cysteine 231, cysteine 214–cysteine 243, cysteine 342–cysteine 355, cysteine 419–cysteine 453, and cysteine 434–cysteine 465.

The protein resides in the endoplasmic reticulum lumen. In terms of biological role, probable lectin that binds selectively to improperly folded lumenal proteins. May function in endoplasmic reticulum quality control and endoplasmic reticulum-associated degradation (ERAD) of both non-glycosylated proteins and glycoproteins. The polypeptide is Endoplasmic reticulum lectin 1 (erlec1) (Xenopus tropicalis (Western clawed frog)).